Reading from the N-terminus, the 868-residue chain is Monofunctional pimaradiene synthase (868 aa).

Mg(2+) is bound by residues Asp-620, Asp-624, Asn-764, Thr-768, and Glu-772.

This sequence belongs to the terpene synthase family. Tpsd subfamily. Mg(2+) is required as a cofactor.

The enzyme catalyses (+)-copalyl diphosphate = (-)-pimara-8(14),15-diene + diphosphate. Its pathway is terpene metabolism; oleoresin biosynthesis. Functionally, involved in defensive oleoresin formation in conifers in response to insect attack or other injury. Involved in diterpene (C20) olefins biosynthesis. Monofunctional enzyme lacking the DXDD motif in the class II active site relevant for the cyclization of geranylgeranyl diphosphate (GGPP). Requires (+)-copalyl diphosphate ((+)-CPP) as substrate, but no activity with GGPP or ent-CPP. Pimaradiene is the major products of the enzyme. The protein is Monofunctional pimaradiene synthase of Pinus banksiana (Jack pine).